Here is a 681-residue protein sequence, read N- to C-terminus: MKTTCFLISLILIQGTKNLPILEIASNNQPQNVDSVCSGTLQKTEDVHLMGFTLSGQKVADSPLEASKRWAFRTGVPPKNVEYTEGEEAKTCYNISVTDPSGKSLLLDPPTNIRDYPKCKTIHHIQGQNPHAQGIALHLWGAFFLYDRIASTTMYRGKVFTEGNIAAMIVNKTVHKMIFSRQGQGYRHMNLTSTNKYWTSSNGTQTNDTGCFGALQEYNSTKNQTCAPSKIPPPLPTARPEIKLTSTPTDATKLNTTDPSSDDEDLATSGSGSGEREPHTTSDAVTKQGLSSTMPPTPSPQPSTPQQGGNNTNHSQDAVTELDKNNTTAQPSMPPHNTTTISTNNTSKHNFSTLSAPLQNTTNDNTQSTITENEQTSAPSITTLPPTGNPTTAKSTSSKKGPATTAPNTTNEHFTSPPPTPSSTAQHLVYFRRKRSILWREGDMFPFLDGLINAPIDFDPVPNTKTIFDESSSSGASAEEDQHASPNISLTLSYFPNINENTAYSGENENDCDAELRIWSVQEDDLAAGLSWIPFFGPGIEGLYTAVLIKNQNNLVCRLRRLANQTAKSLELLLRVTTEERTFSLINRHAIDFLLTRWGGTCKVLGPDCCIGIEDLSKNISEQIDQIKKDEQKEGTGWGLGGKWWTSDWGVLTNLGILLLLSIAVLIALSCICRIFTKYIG.

Residues 1–18 form the signal peptide; sequence MKTTCFLISLILIQGTKN. Topologically, residues 19-648 are extracellular; sequence LPILEIASNN…GLGGKWWTSD (630 aa). Intrachain disulfides connect Cys37-Cys610, Cys92-Cys119, Cys211-Cys226, Cys512-Cys557, and Cys602-Cys609. The interval 38–188 is receptor-binding; the sequence is SGTLQKTEDV…FSRQGQGYRH (151 aa). N-linked (GlcNAc...) asparagine; by host glycosylation is found at Asn94, Asn171, Asn190, Asn202, Asn207, Asn219, Asn223, and Asn255. The tract at residues 223–427 is disordered; sequence NQTCAPSKIP…PPTPSSTAQH (205 aa). Composition is skewed to polar residues over residues 244–259, 281–290, and 308–318; these read LTST…TTDP, TSDAVTKQGL, and GGNNTNHSQDA. The interval 277 to 455 is mucin-like region; it reads EPHTTSDAVT…PFLDGLINAP (179 aa). N-linked (GlcNAc...) asparagine; by host glycosylation is found at Asn310, Asn313, Asn325, Asn326, Asn337, Asn344, Asn345, Asn350, Asn360, Asn408, and Asn487. Over residues 337–347 the composition is skewed to low complexity; sequence NTTTISTNNTS. A compositionally biased stretch (polar residues) spans 348–414; the sequence is KHNFSTLSAP…TAPNTTNEHF (67 aa). The interval 529-549 is fusion peptide; sequence GLSWIPFFGPGIEGLYTAVLI. N-linked (GlcNAc...) asparagine; by host glycosylation is present at Asn564. N-linked (GlcNAc...) asparagine; by host glycosylation is present at Asn619. A helical membrane pass occupies residues 649–669; sequence WGVLTNLGILLLLSIAVLIAL. At 670 to 681 the chain is on the cytoplasmic side; it reads SCICRIFTKYIG. Residues Cys671 and Cys673 are each lipidated (S-palmitoyl cysteine; by host).

It belongs to the filoviruses glycoprotein family. As to quaternary structure, homotrimer; each monomer consists of a GP1 and a GP2 subunit linked by disulfide bonds. The resulting peplomers (GP1,2) protrude from the virus surface as spikes. GP1,2 interacts with human CD209 and CLEC4M (collectively referred to as DC-SIGN(R)). Asialoglycoprotein receptor (ASGP-R) may be a liver-specific receptor for GP1,2. Members of the Tyro3 receptor tyrosine kinase family may be cell entry factors interacting with GP1,2. In terms of processing, N-glycosylated. Post-translationally, O-glycosylated in the mucin-like region. Specific enzymatic cleavages in vivo yield mature proteins. The precursor is processed into GP1 and GP2 by host cell furin in the trans Golgi, and maybe by other host proteases, to yield the mature GP1 and GP2 proteins. The cleavage site corresponds to the furin optimal cleavage sequence [KR]-X-[KR]-R. In terms of processing, GP1 is phosphorylated on serine residues between residues 260 and 273.

The protein localises to the virion membrane. It localises to the host cell membrane. GP1 is responsible for binding to the receptor(s) on target cells. Interacts with CD209/DC-SIGN and CLEC4M/DC-SIGNR which act as cofactors for virus entry into the host cell. Binding to CD209 and CLEC4M, which are respectively found on dendritic cells (DCs), and on endothelial cells of liver sinusoids and lymph node sinuses, facilitate infection of macrophages and endothelial cells. These interactions not only facilitate virus cell entry, but also allow capture of viral particles by DCs and subsequent transmission to susceptible cells without DCs infection (trans infection). Its function is as follows. GP2 acts as a class I viral fusion protein. Under the current model, the protein has at least 3 conformational states: pre-fusion native state, pre-hairpin intermediate state, and post-fusion hairpin state. During viral and target cell membrane fusion, the coiled coil regions (heptad repeats) assume a trimer-of-hairpins structure, positioning the fusion peptide in close proximity to the C-terminal region of the ectodomain. The formation of this structure appears to drive apposition and subsequent fusion of viral and target cell membranes. Responsible for penetration of the virus into the cell cytoplasm by mediating the fusion of the membrane of the endocytosed virus particle with the endosomal membrane. Low pH in endosomes induces an irreversible conformational change in GP2, releasing the fusion hydrophobic peptide. This Lake Victoria marburgvirus (strain Musoke-80) (MARV) protein is Envelope glycoprotein (GP).